We begin with the raw amino-acid sequence, 239 residues long: 1-(5-phosphoribosyl)-5-[(5-phosphoribosylamino)methylideneamino] imidazole-4-carboxamide isomerase (239 aa).

Catalysis depends on aspartate 8, which acts as the Proton acceptor. Aspartate 129 (proton donor) is an active-site residue.

This sequence belongs to the HisA/HisF family.

The protein resides in the cytoplasm. It catalyses the reaction 1-(5-phospho-beta-D-ribosyl)-5-[(5-phospho-beta-D-ribosylamino)methylideneamino]imidazole-4-carboxamide = 5-[(5-phospho-1-deoxy-D-ribulos-1-ylimino)methylamino]-1-(5-phospho-beta-D-ribosyl)imidazole-4-carboxamide. The protein operates within amino-acid biosynthesis; L-histidine biosynthesis; L-histidine from 5-phospho-alpha-D-ribose 1-diphosphate: step 4/9. The polypeptide is 1-(5-phosphoribosyl)-5-[(5-phosphoribosylamino)methylideneamino] imidazole-4-carboxamide isomerase (Pelagibacter ubique (strain HTCC1062)).